Consider the following 96-residue polypeptide: ATP synthase subunit c (96 aa).

The next 2 helical transmembrane spans lie at 24–44 (HVGA…VGVG) and 75–95 (AIAE…IFVA).

It belongs to the ATPase C chain family. In terms of assembly, F-type ATPases have 2 components, F(1) - the catalytic core - and F(0) - the membrane proton channel. F(1) has five subunits: alpha(3), beta(3), gamma(1), delta(1), epsilon(1). F(0) has three main subunits: a(1), b(2) and c(10-14). The alpha and beta chains form an alternating ring which encloses part of the gamma chain. F(1) is attached to F(0) by a central stalk formed by the gamma and epsilon chains, while a peripheral stalk is formed by the delta and b chains.

It is found in the cell membrane. Its function is as follows. F(1)F(0) ATP synthase produces ATP from ADP in the presence of a proton or sodium gradient. F-type ATPases consist of two structural domains, F(1) containing the extramembraneous catalytic core and F(0) containing the membrane proton channel, linked together by a central stalk and a peripheral stalk. During catalysis, ATP synthesis in the catalytic domain of F(1) is coupled via a rotary mechanism of the central stalk subunits to proton translocation. Functionally, key component of the F(0) channel; it plays a direct role in translocation across the membrane. A homomeric c-ring of between 10-14 subunits forms the central stalk rotor element with the F(1) delta and epsilon subunits. The sequence is that of ATP synthase subunit c from Mycoplasmoides gallisepticum (strain R(low / passage 15 / clone 2)) (Mycoplasma gallisepticum).